The chain runs to 300 residues: HTH-type transcriptional regulator ArgP (300 aa).

The 57-residue stretch at 4–60 (FDYKLLAALAAVVEQGGFERAAQALGLSQSAVSQRIKLLEARVGQPVLVRETPPHPT) folds into the HTH lysR-type domain. The H-T-H motif DNA-binding region spans 21-40 (FERAAQALGLSQSAVSQRIK).

It belongs to the LysR transcriptional regulatory family. In terms of assembly, homodimer.

Functionally, controls the transcription of genes involved in arginine and lysine metabolism. The sequence is that of HTH-type transcriptional regulator ArgP from Pseudomonas aeruginosa (strain UCBPP-PA14).